Here is a 51-residue protein sequence, read N- to C-terminus: Cytoplasmic FMR1-interacting protein 1 (51 aa).

This sequence belongs to the CYFIP family. As to quaternary structure, component of the WAVE1 complex composed of ABI2, CYFIP1 or CYFIP2, BRK1, NCKAP1 and WASF1/WAVE1. Within the complex, a heterodimer containing NCKAP1 and CYFIP1 interacts with a heterotrimer formed by WAVE1, ABI2 and BRK1. Component of the CYFIP1-EIF4E-FMR1 complex which is composed of CYFIP, EIF4E and FMR1. Interacts with FMR1 but does not bind to related proteins FXR1 or FXR2. Interaction with EIF4E stimulates FMR1 binding. Component of the WAVE2 complex composed of ABI1, CYFIP1/SRA1, NCKAP1/NAP1 (NCKAP1l/HEM1 in hematopoietic cells) and WASF2/WAVE2. Interacts with the active GTP-bound form of RAC1. Interacts through its C-terminus with the C-terminus of DPYSL2/CRMP2 which is necessary for DPYSL2-induced axon outgrowth. Interacts with NYAP1, NYAP2 and MYO16. Interacts with TMEM108 (via N-terminus); the interaction associates TMEM108 with the WAVE1 complex.

It is found in the cytoplasm. The protein localises to the perinuclear region. Its subcellular location is the cell projection. It localises to the lamellipodium. The protein resides in the ruffle. It is found in the synapse. The protein localises to the synaptosome. Functionally, component of the CYFIP1-EIF4E-FMR1 complex which binds to the mRNA cap and mediates translational repression. In the CYFIP1-EIF4E-FMR1 complex this subunit is an adapter between EIF4E and FMR1. Promotes the translation repression activity of FMR1 in brain probably by mediating its association with EIF4E and mRNA. Regulates formation of membrane ruffles and lamellipodia. Plays a role in axon outgrowth. Binds to F-actin but not to RNA. Part of the WAVE complex that regulates actin filament reorganization via its interaction with the Arp2/3 complex. Actin remodeling activity is regulated by RAC1. Regulator of epithelial morphogenesis. As component of the WAVE1 complex, required for BDNF-NTRK2 endocytic trafficking and signaling from early endosomes. The polypeptide is Cytoplasmic FMR1-interacting protein 1 (Bos taurus (Bovine)).